A 458-amino-acid polypeptide reads, in one-letter code: Glutamyl-tRNA reductase (458 aa).

Residues 49-52, Ser109, 114-116, and Gln120 each bind substrate; these read TCNR and EQQ. Catalysis depends on Cys50, which acts as the Nucleophile. Residue 191–196 coordinates NADP(+); that stretch reads GAGAMA.

The protein belongs to the glutamyl-tRNA reductase family. In terms of assembly, homodimer.

The catalysed reaction is (S)-4-amino-5-oxopentanoate + tRNA(Glu) + NADP(+) = L-glutamyl-tRNA(Glu) + NADPH + H(+). Its pathway is porphyrin-containing compound metabolism; protoporphyrin-IX biosynthesis; 5-aminolevulinate from L-glutamyl-tRNA(Glu): step 1/2. Catalyzes the NADPH-dependent reduction of glutamyl-tRNA(Glu) to glutamate 1-semialdehyde (GSA). In Corynebacterium aurimucosum (strain ATCC 700975 / DSM 44827 / CIP 107346 / CN-1) (Corynebacterium nigricans), this protein is Glutamyl-tRNA reductase.